The primary structure comprises 1096 residues: Pentatricopeptide repeat-containing protein At5g55840 (1096 aa).

27 PPR repeats span residues 122 to 156, 157 to 191, 192 to 226, 227 to 261, 262 to 296, 297 to 331, 332 to 366, 367 to 401, 402 to 436, 437 to 471, 472 to 506, 507 to 541, 542 to 576, 577 to 607, 612 to 646, 647 to 681, 683 to 717, 718 to 752, 753 to 787, 788 to 822, 823 to 857, 858 to 892, 893 to 927, 928 to 962, 963 to 997, 998 to 1032, and 1033 to 1068; these read NPSV…GFNP, SVYT…KICP, DVAT…GYAP, TIVT…GVDA, DVCT…MIHP, NEVT…GLSP, NHVT…GLTP, SEVS…GVCV, GRIT…GIDP, DIVT…GLSP, NGII…GHTR, DHFT…GILP, NTVS…GHHP, TFFT…LHAV, DTVM…SILP, DSYT…GNVL, NKVM…GHTP, DIVT…NGGP, NLTT…GILP, DKLT…GVEV, DRYT…GISL, DKDT…GISP, ESRK…KICP, PNVA…KLVP, TIAS…GLKL, DLVS…GFLA, and NATT…GFIT.

This sequence belongs to the PPR family. P subfamily.

The protein is Pentatricopeptide repeat-containing protein At5g55840 of Arabidopsis thaliana (Mouse-ear cress).